Consider the following 221-residue polypeptide: Redox-sensing transcriptional repressor Rex (221 aa).

The segment at residues 17 to 56 (IYYYYLSSLHEAGIKRINSTEISEAIKFDAATVRRDFSYF) is a DNA-binding region (H-T-H motif). An NAD(+)-binding site is contributed by 91 to 96 (GTGNLG).

This sequence belongs to the transcriptional regulatory Rex family. In terms of assembly, homodimer.

It is found in the cytoplasm. Functionally, modulates transcription in response to changes in cellular NADH/NAD(+) redox state. This Oenococcus oeni (strain ATCC BAA-331 / PSU-1) protein is Redox-sensing transcriptional repressor Rex.